The chain runs to 311 residues: Serine/threonine-protein phosphatase 4 catalytic subunit A (311 aa).

Residues D58, H60, D86, and N118 each contribute to the Mn(2+) site. The active-site Proton donor is the H119. Mn(2+) contacts are provided by H168 and H242. L311 bears the Leucine methyl ester mark.

It belongs to the PPP phosphatase family. PP-4 (PP-X) subfamily. In terms of assembly, serine/threonine-protein phosphatase 4 (PP4) occurs in different assemblies of the catalytic and one or more regulatory subunits. Mn(2+) is required as a cofactor.

It is found in the cytoplasm. It localises to the cytoskeleton. The protein localises to the microtubule organizing center. The protein resides in the centrosome. It carries out the reaction O-phospho-L-seryl-[protein] + H2O = L-seryl-[protein] + phosphate. It catalyses the reaction O-phospho-L-threonyl-[protein] + H2O = L-threonyl-[protein] + phosphate. Its function is as follows. Protein phosphatase that regulates many processes such as microtubule organization at centrosomes. In Danio rerio (Zebrafish), this protein is Serine/threonine-protein phosphatase 4 catalytic subunit A (ppp4ca).